A 186-amino-acid polypeptide reads, in one-letter code: Large ribosomal subunit protein uL10 (186 aa).

It belongs to the universal ribosomal protein uL10 family. In terms of assembly, part of the ribosomal stalk of the 50S ribosomal subunit. The N-terminus interacts with L11 and the large rRNA to form the base of the stalk. The C-terminus forms an elongated spine to which L12 dimers bind in a sequential fashion forming a multimeric L10(L12)X complex.

Functionally, forms part of the ribosomal stalk, playing a central role in the interaction of the ribosome with GTP-bound translation factors. This chain is Large ribosomal subunit protein uL10, found in Rhodococcus jostii (strain RHA1).